The following is a 385-amino-acid chain: 3-hydroxyisobutyryl-CoA hydrolase, mitochondrial (385 aa).

Residues glutamate 120, glycine 145, glutamate 168, and aspartate 176 each contribute to the substrate site.

The protein belongs to the enoyl-CoA hydratase/isomerase family.

It localises to the mitochondrion. It carries out the reaction 3-hydroxy-2-methylpropanoyl-CoA + H2O = 3-hydroxy-2-methylpropanoate + CoA + H(+). Its pathway is amino-acid degradation; L-valine degradation. Its function is as follows. Hydrolyzes 3-hydroxyisobutyryl-CoA (HIBYL-CoA), a saline catabolite. Has high activity toward isobutyryl-CoA. Could be an isobutyryl-CoA dehydrogenase that functions in valine catabolism. Also hydrolyzes 3-hydroxypropanoyl-CoA. This is 3-hydroxyisobutyryl-CoA hydrolase, mitochondrial (HIBCH) from Gallus gallus (Chicken).